A 1010-amino-acid polypeptide reads, in one-letter code: Phosphoenolpyruvate carboxylase (1010 aa).

The segment covering 1–18 (MIMRSPETSGASMPQSTA) has biased composition (polar residues). Disordered stretches follow at residues 1-36 (MIMR…PGAG) and 132-154 (LRPS…PPLA). Catalysis depends on residues H195 and K652. The disordered stretch occupies residues 967-986 (QNRQPPMSESPGTPEDRRTY).

The protein belongs to the PEPCase type 1 family. Mg(2+) serves as cofactor.

The enzyme catalyses oxaloacetate + phosphate = phosphoenolpyruvate + hydrogencarbonate. Its function is as follows. Forms oxaloacetate, a four-carbon dicarboxylic acid source for the tricarboxylic acid cycle. The sequence is that of Phosphoenolpyruvate carboxylase from Parasynechococcus marenigrum (strain WH8102).